We begin with the raw amino-acid sequence, 405 residues long: Tryptophan synthase beta chain (405 aa).

Lys-98 bears the N6-(pyridoxal phosphate)lysine mark.

This sequence belongs to the TrpB family. Tetramer of two alpha and two beta chains. The cofactor is pyridoxal 5'-phosphate.

It catalyses the reaction (1S,2R)-1-C-(indol-3-yl)glycerol 3-phosphate + L-serine = D-glyceraldehyde 3-phosphate + L-tryptophan + H2O. Its pathway is amino-acid biosynthesis; L-tryptophan biosynthesis; L-tryptophan from chorismate: step 5/5. Functionally, the beta subunit is responsible for the synthesis of L-tryptophan from indole and L-serine. This chain is Tryptophan synthase beta chain, found in Methylococcus capsulatus (strain ATCC 33009 / NCIMB 11132 / Bath).